Reading from the N-terminus, the 268-residue chain is Tryptophan synthase alpha chain (268 aa).

Residues Glu49 and Asp60 each act as proton acceptor in the active site.

It belongs to the TrpA family. Tetramer of two alpha and two beta chains.

It catalyses the reaction (1S,2R)-1-C-(indol-3-yl)glycerol 3-phosphate + L-serine = D-glyceraldehyde 3-phosphate + L-tryptophan + H2O. Its pathway is amino-acid biosynthesis; L-tryptophan biosynthesis; L-tryptophan from chorismate: step 5/5. In terms of biological role, the alpha subunit is responsible for the aldol cleavage of indoleglycerol phosphate to indole and glyceraldehyde 3-phosphate. The sequence is that of Tryptophan synthase alpha chain from Escherichia coli (strain 55989 / EAEC).